We begin with the raw amino-acid sequence, 160 residues long: Cytochrome c-type biogenesis protein CcmE (160 aa).

The Cytoplasmic segment spans residues 1–9 (MRGLKKKRR). Residues 10–30 (IQIIAIAAVALTIATIMIGTA) traverse the membrane as a helical; Signal-anchor for type II membrane protein segment. Topologically, residues 31-160 (MRDGINFFRS…DGGYGGASGS (130 aa)) are periplasmic. H123 and Y127 together coordinate heme. The tract at residues 141-160 (VYKDPNATDADGGYGGASGS) is disordered.

It belongs to the CcmE/CycJ family.

It localises to the cell inner membrane. In terms of biological role, heme chaperone required for the biogenesis of c-type cytochromes. Transiently binds heme delivered by CcmC and transfers the heme to apo-cytochromes in a process facilitated by CcmF and CcmH. The sequence is that of Cytochrome c-type biogenesis protein CcmE from Dinoroseobacter shibae (strain DSM 16493 / NCIMB 14021 / DFL 12).